Consider the following 628-residue polypeptide: Netrin-4 (628 aa).

The N-terminal stretch at 1–18 (MGSCARLLLLWGCTVVAA) is a signal peptide. Residues 30–261 (CEKACNPRMG…AIYDFIVKGS (232 aa)) form the Laminin N-terminal domain. Residues Asn-56 and Asn-163 are each glycosylated (N-linked (GlcNAc...) asparagine). Cystine bridges form between Cys-262/Cys-271, Cys-264/Cys-293, Cys-295/Cys-304, Cys-307/Cys-329, Cys-332/Cys-341, Cys-334/Cys-359, Cys-362/Cys-371, Cys-374/Cys-392, Cys-395/Cys-413, Cys-397/Cys-420, Cys-422/Cys-431, and Cys-434/Cys-446. 3 consecutive Laminin EGF-like domains span residues 262-331 (CFCN…ECRT), 332-394 (CKCN…ACKP), and 395-448 (CSCH…GCRP). N-linked (GlcNAc...) asparagine glycosylation is present at Asn-353. A glycan (N-linked (GlcNAc...) asparagine) is linked at Asn-483. 2 disulfides stabilise this stretch: Cys-506–Cys-576 and Cys-520–Cys-627. Residues 506–627 (CECKEQTLGN…KVMDILKREC (122 aa)) form the NTR domain.

May form a homodimer.

Its subcellular location is the secreted. It is found in the extracellular space. It localises to the extracellular matrix. May play an important role in neural, kidney and vascular development. This chain is Netrin-4 (NTN4), found in Pongo abelii (Sumatran orangutan).